Reading from the N-terminus, the 415-residue chain is Homoserine O-acetyltransferase (415 aa).

Positions 47 to 369 constitute an AB hydrolase-1 domain; sequence NAVLVCHGLT…HGHDAFLVEP (323 aa). Serine 155 acts as the Nucleophile in catalysis. Position 226 (arginine 226) interacts with substrate. Active-site residues include aspartate 329 and histidine 362. Residue aspartate 363 coordinates substrate. The segment at 387-415 is disordered; sequence RAVTDTATDGGEPDEEEDFAPVHSSLFSR.

Belongs to the AB hydrolase superfamily. MetX family. As to quaternary structure, homodimer.

It localises to the cytoplasm. The catalysed reaction is L-homoserine + acetyl-CoA = O-acetyl-L-homoserine + CoA. It functions in the pathway amino-acid biosynthesis; L-methionine biosynthesis via de novo pathway; O-acetyl-L-homoserine from L-homoserine: step 1/1. Its function is as follows. Transfers an acetyl group from acetyl-CoA to L-homoserine, forming acetyl-L-homoserine. The protein is Homoserine O-acetyltransferase of Haloferax prahovense (strain DSM 18310 / JCM 13924 / TL6).